A 247-amino-acid chain; its full sequence is Protein Thf1 (247 aa).

Residues 198–224 adopt a coiled-coil conformation; sequence IAQVRQAMDDILEAQKKRREADQAKKE. A disordered region spans residues 209–247; sequence LEAQKKRREADQAKKEGSDDTPTTEASTPDSEPTSEVSS. A compositionally biased stretch (basic and acidic residues) spans 210–226; it reads EAQKKRREADQAKKEGS. Over residues 228 to 247 the composition is skewed to polar residues; that stretch reads DTPTTEASTPDSEPTSEVSS.

This sequence belongs to the THF1 family.

In terms of biological role, may be involved in photosynthetic membrane biogenesis. The polypeptide is Protein Thf1 (Acaryochloris marina (strain MBIC 11017)).